The chain runs to 340 residues: MSELDQLRQEAEQLKNQIRDARKACADATLSQITANIDPVGRIQMRTRRTLRGHLAKIYAMHWGTDSRLLVSASQDGKLIIWDSYTTNKVHAIPLRSSWVMTCAYAPSGNYVACGGLDNICSIYNLKTREGNVRVSRELAGHTGYLSCCRFLDDNQIVTSSGDTTCALWDIETGQQTTTFAGHTGDVMSLSLAPDTRLFVSGACDASAKLWDVREGMCRQTFTGHESDINAICFFPNGNAFATGSDDATCRLFDLRADQELMVYSHDNIICGITSVAFSKSGRLLLAGYDDFNCNVWDALKADRAGVLAGHDNRVSCLGVTDDGMAVATGSWDSFLKIWN.

7 WD repeats span residues 53-83 (GHLA…IIWD), 95-125 (LRSS…SIYN), 141-170 (GHTG…ALWD), 182-212 (GHTG…KLWD), 224-254 (GHES…RLFD), 268-298 (NIIC…NVWD), and 310-340 (GHDN…KIWN).

It belongs to the WD repeat G protein beta family. In terms of assembly, g proteins are composed of 3 units, alpha, beta and gamma.

Guanine nucleotide-binding proteins (G proteins) are involved as a modulator or transducer in various transmembrane signaling systems. The beta and gamma chains are required for the GTPase activity, for replacement of GDP by GTP, and for G protein-effector interaction. The polypeptide is Guanine nucleotide-binding protein G(I)/G(S)/G(T) subunit beta-1 (gnb1) (Danio rerio (Zebrafish)).